A 499-amino-acid chain; its full sequence is Glycerol kinase (499 aa).

Position 15 (Thr15) interacts with ADP. Positions 15, 16, and 17 each coordinate ATP. Position 15 (Thr15) interacts with sn-glycerol 3-phosphate. Arg19 is an ADP binding site. The sn-glycerol 3-phosphate site is built by Arg85, Glu86, Tyr137, and Asp246. Glycerol is bound by residues Arg85, Glu86, Tyr137, Asp246, and Gln247. The ADP site is built by Thr268 and Gly311. Positions 268, 311, 315, and 412 each coordinate ATP. Residues Gly412 and Asn416 each coordinate ADP.

It belongs to the FGGY kinase family.

It catalyses the reaction glycerol + ATP = sn-glycerol 3-phosphate + ADP + H(+). The protein operates within polyol metabolism; glycerol degradation via glycerol kinase pathway; sn-glycerol 3-phosphate from glycerol: step 1/1. Its activity is regulated as follows. Inhibited by fructose 1,6-bisphosphate (FBP). Functionally, key enzyme in the regulation of glycerol uptake and metabolism. Catalyzes the phosphorylation of glycerol to yield sn-glycerol 3-phosphate. In Parabacteroides distasonis (strain ATCC 8503 / DSM 20701 / CIP 104284 / JCM 5825 / NCTC 11152), this protein is Glycerol kinase.